The chain runs to 184 residues: MIIISKSAKHYLSKLLSKKKKGTNIKLSIENKDKENLTCQIKYFDKKEENFNYTKFNFIDFKVYVKKNIFIYIKKIKIDIESKSLKDEIIIKIFKKRENLKNRISNFIKYKINSKLEYHGGFVELIDIKENMFVILKFFGGCNGCSMAKVTLKEGIEKEIKKNFPNIKGVIDITDHIHSESSFY.

Positions 142 and 145 each coordinate [4Fe-4S] cluster.

Belongs to the NfuA family. In terms of assembly, homodimer. [4Fe-4S] cluster is required as a cofactor.

Its function is as follows. Involved in iron-sulfur cluster biogenesis. Binds a 4Fe-4S cluster, can transfer this cluster to apoproteins, and thereby intervenes in the maturation of Fe/S proteins. Could also act as a scaffold/chaperone for damaged Fe/S proteins. This Wigglesworthia glossinidia brevipalpis protein is Fe/S biogenesis protein NfuA.